A 256-amino-acid polypeptide reads, in one-letter code: Acetyl-coenzyme A carboxylase carboxyl transferase subunit alpha (256 aa).

Residues 1–236 (MTDVARILKE…RSHLIDEITQ (236 aa)) form the CoA carboxyltransferase C-terminal domain.

The protein belongs to the AccA family. Acetyl-CoA carboxylase is a heterohexamer composed of biotin carboxyl carrier protein (AccB), biotin carboxylase (AccC) and two subunits each of ACCase subunit alpha (AccA) and ACCase subunit beta (AccD).

The protein resides in the cytoplasm. The catalysed reaction is N(6)-carboxybiotinyl-L-lysyl-[protein] + acetyl-CoA = N(6)-biotinyl-L-lysyl-[protein] + malonyl-CoA. The protein operates within lipid metabolism; malonyl-CoA biosynthesis; malonyl-CoA from acetyl-CoA: step 1/1. Functionally, component of the acetyl coenzyme A carboxylase (ACC) complex. First, biotin carboxylase catalyzes the carboxylation of biotin on its carrier protein (BCCP) and then the CO(2) group is transferred by the carboxyltransferase to acetyl-CoA to form malonyl-CoA. This Streptococcus equi subsp. zooepidemicus (strain MGCS10565) protein is Acetyl-coenzyme A carboxylase carboxyl transferase subunit alpha.